The sequence spans 470 residues: ATP synthase subunit beta (470 aa).

Position 155 to 162 (Gly155 to Thr162) interacts with ATP.

The protein belongs to the ATPase alpha/beta chains family. In terms of assembly, F-type ATPases have 2 components, CF(1) - the catalytic core - and CF(0) - the membrane proton channel. CF(1) has five subunits: alpha(3), beta(3), gamma(1), delta(1), epsilon(1). CF(0) has three main subunits: a(1), b(2) and c(9-12). The alpha and beta chains form an alternating ring which encloses part of the gamma chain. CF(1) is attached to CF(0) by a central stalk formed by the gamma and epsilon chains, while a peripheral stalk is formed by the delta and b chains.

The protein resides in the cell inner membrane. The enzyme catalyses ATP + H2O + 4 H(+)(in) = ADP + phosphate + 5 H(+)(out). Functionally, produces ATP from ADP in the presence of a proton gradient across the membrane. The catalytic sites are hosted primarily by the beta subunits. This Oleidesulfovibrio alaskensis (strain ATCC BAA-1058 / DSM 17464 / G20) (Desulfovibrio alaskensis) protein is ATP synthase subunit beta.